The sequence spans 173 residues: Photosystem I assembly protein Ycf3 (173 aa).

3 TPR repeats span residues Ala-35–Ala-68, Gly-72–Gln-105, and Gly-120–Gly-153.

The protein belongs to the Ycf3 family.

The protein resides in the cellular thylakoid membrane. Essential for the assembly of the photosystem I (PSI) complex. May act as a chaperone-like factor to guide the assembly of the PSI subunits. This chain is Photosystem I assembly protein Ycf3, found in Synechococcus sp. (strain CC9311).